A 117-amino-acid chain; its full sequence is Putative phosphotransferase enzyme IIB component MG129 (117 aa).

The chain crosses the membrane as a helical span at residues 1 to 21 (MKWLLWLGYIFSFGLLYLWIV). Residues 42–117 (PFKVKDFVSA…ELKKKIEDEQ (76 aa)) enclose the PTS EIIB type-1 domain.

Its subcellular location is the membrane. The phosphoenolpyruvate-dependent sugar phosphotransferase system (PTS), a major carbohydrate active -transport system, catalyzes the phosphorylation of incoming sugar substrates concomitant with their translocation across the cell membrane. This is Putative phosphotransferase enzyme IIB component MG129 from Mycoplasma genitalium (strain ATCC 33530 / DSM 19775 / NCTC 10195 / G37) (Mycoplasmoides genitalium).